Consider the following 312-residue polypeptide: Putative endo-1,4-beta-xylanase (312 aa).

The region spanning 1-301 (MKQQYLLDYE…KPCFYSFLQA (301 aa)) is the GH10 domain. Glutamate 104 acts as the Proton donor in catalysis. Glutamate 216 acts as the Nucleophile in catalysis.

Belongs to the glycosyl hydrolase 10 (cellulase F) family.

It catalyses the reaction Endohydrolysis of (1-&gt;4)-beta-D-xylosidic linkages in xylans.. It functions in the pathway glycan degradation; xylan degradation. Could be a xylanase. The polypeptide is Putative endo-1,4-beta-xylanase (Caldicellulosiruptor saccharolyticus (Caldocellum saccharolyticum)).